Here is a 41-residue protein sequence, read N- to C-terminus: Large ribosomal subunit protein bL36 (41 aa).

It belongs to the bacterial ribosomal protein bL36 family.

The sequence is that of Large ribosomal subunit protein bL36 from Methylocella silvestris (strain DSM 15510 / CIP 108128 / LMG 27833 / NCIMB 13906 / BL2).